We begin with the raw amino-acid sequence, 684 residues long: DNA helicase IV (684 aa).

The region spanning 195–505 (SPLNPAQARA…CDLDTTYRFN (311 aa)) is the UvrD-like helicase ATP-binding domain. Residues 216-223 (AGAGSGKT) and arginine 503 contribute to the ATP site.

The protein belongs to the helicase family. UvrD subfamily.

The catalysed reaction is Couples ATP hydrolysis with the unwinding of duplex DNA by translocating in the 3'-5' direction.. It catalyses the reaction ATP + H2O = ADP + phosphate + H(+). In terms of biological role, helicase IV catalyzes the unwinding of duplex DNA in the 3' to 5' direction with respect to the bound single strand in a reaction that is dependent upon the hydrolysis of ATP. The protein is DNA helicase IV (helD) of Escherichia coli (strain K12).